The sequence spans 259 residues: Small ribosomal subunit protein uS2 (259 aa).

This sequence belongs to the universal ribosomal protein uS2 family.

The polypeptide is Small ribosomal subunit protein uS2 (Dinoroseobacter shibae (strain DSM 16493 / NCIMB 14021 / DFL 12)).